Reading from the N-terminus, the 422-residue chain is 3-phosphoshikimate 1-carboxyvinyltransferase (422 aa).

Positions 21, 22, and 26 each coordinate 3-phosphoshikimate. K21 provides a ligand contact to phosphoenolpyruvate. Residues G93 and R121 each contribute to the phosphoenolpyruvate site. 3-phosphoshikimate is bound by residues S166, S167, Q168, S194, D310, and K337. Q168 contacts phosphoenolpyruvate. Catalysis depends on D310, which acts as the Proton acceptor. Residues R341, R382, and K407 each contribute to the phosphoenolpyruvate site.

The protein belongs to the EPSP synthase family. In terms of assembly, monomer.

Its subcellular location is the cytoplasm. It catalyses the reaction 3-phosphoshikimate + phosphoenolpyruvate = 5-O-(1-carboxyvinyl)-3-phosphoshikimate + phosphate. It participates in metabolic intermediate biosynthesis; chorismate biosynthesis. In terms of biological role, catalyzes the transfer of the enolpyruvyl moiety of phosphoenolpyruvate (PEP) to the 5-hydroxyl of shikimate-3-phosphate (S3P) to produce enolpyruvyl shikimate-3-phosphate and inorganic phosphate. The chain is 3-phosphoshikimate 1-carboxyvinyltransferase from Methanoculleus marisnigri (strain ATCC 35101 / DSM 1498 / JR1).